The chain runs to 193 residues: Mediator of RNA polymerase II transcription subunit 11 (193 aa).

A coiled-coil region spans residues 31-68; the sequence is AREIMQDLGKEKQISKNKMDDNANSFKKLITQVENELS. The interval 115-193 is disordered; the sequence is IEPPTQEVDE…EEEEGEQMEN (79 aa). A compositionally biased stretch (acidic residues) spans 121-143; sequence EVDEDNEDEEDSGDADMLEETPE. The span at 150–175 shows a compositional bias: low complexity; sequence TTSSSATTSDGGSGGADDAASSSAPR. Residues 184 to 193 show a composition bias toward acidic residues; the sequence is EEEEGEQMEN.

This sequence belongs to the Mediator complex subunit 11 family. In terms of assembly, component of the Mediator complex.

Its subcellular location is the nucleus. Its function is as follows. Component of the Mediator complex, a coactivator involved in the regulated transcription of nearly all RNA polymerase II-dependent genes. Mediator functions as a bridge to convey information from gene-specific regulatory proteins to the basal RNA polymerase II transcription machinery. Mediator is recruited to promoters by direct interactions with regulatory proteins and serves as a scaffold for the assembly of a functional pre-initiation complex with RNA polymerase II and the general transcription factors. This chain is Mediator of RNA polymerase II transcription subunit 11 (mdt-11), found in Caenorhabditis briggsae.